The primary structure comprises 1329 residues: BRCT domain-containing protein At4g02110 (1329 aa).

BRCT domains follow at residues 7–97 and 104–194; these read LPPK…SILY and NGIP…DYEI. Disordered regions lie at residues 295-378, 393-470, 576-645, 745-827, and 952-1077; these read ANKT…SMER, GEEF…TSEL, EVPE…SPTD, NDVP…ADGK, and AKKE…KESK. 2 stretches are compositionally biased toward polar residues: residues 323–335 and 363–378; these read SLAT…LQRS and SAFN…SMER. 2 stretches are compositionally biased toward basic and acidic residues: residues 410-422 and 600-611; these read VSRK…HHNS and RMKDKQETELTT. Over residues 793–802 the composition is skewed to basic residues; it reads GKSRVKKTKI. 2 stretches are compositionally biased toward basic and acidic residues: residues 818-827 and 971-983; these read DGGDNSADGK and DDNK…EGIV. A compositionally biased stretch (low complexity) spans 986–1004; it reads SSLQSGKKGSSSRVEVGKS. Residues 1024 to 1047 are compositionally biased toward basic and acidic residues; it reads VMKDVGDNSAKEKENIAVDNESRK. Positions 1090-1181 constitute a BRCT 3 domain; sequence FQDQEHEPKF…KLLQEEPYEW (92 aa).

In Arabidopsis thaliana (Mouse-ear cress), this protein is BRCT domain-containing protein At4g02110.